A 29-amino-acid polypeptide reads, in one-letter code: Cytochrome b6-f complex subunit 8 (29 aa).

A helical membrane pass occupies residues 3-23; it reads ILTLGWVSLLVVFTWSIAMVV.

It belongs to the PetN family. As to quaternary structure, the 4 large subunits of the cytochrome b6-f complex are cytochrome b6, subunit IV (17 kDa polypeptide, PetD), cytochrome f and the Rieske protein, while the 4 small subunits are PetG, PetL, PetM and PetN. The complex functions as a dimer.

The protein resides in the cellular thylakoid membrane. Its function is as follows. Component of the cytochrome b6-f complex, which mediates electron transfer between photosystem II (PSII) and photosystem I (PSI), cyclic electron flow around PSI, and state transitions. The sequence is that of Cytochrome b6-f complex subunit 8 from Nostoc punctiforme (strain ATCC 29133 / PCC 73102).